The chain runs to 482 residues: Pentatricopeptide repeat-containing protein At1g74900, mitochondrial (482 aa).

11 PPR repeats span residues 90–124 (DASS…RIGP), 125–159 (SPKT…GCFQ), 160–190 (DLAS…LRGR), 194–228 (DTVT…GINP), 229–263 (NLTT…DCEI), 264–298 (DVVT…GVLP), 299–333 (SVAT…GYEP), 334–368 (NVTT…GCEP), 369–403 (NFQT…DCLP), 404–441 (NLDT…GFIP), and 442–476 (RKFT…GSRL).

It belongs to the PPR family. P subfamily.

It localises to the mitochondrion. Required for the trans-splicing of intron 1 of the mitochondrial nad1 transcript encoding the ND1 subunit of the mitochondrial membrane respiratory chain NADH dehydrogenase (Complex I). In Arabidopsis thaliana (Mouse-ear cress), this protein is Pentatricopeptide repeat-containing protein At1g74900, mitochondrial (OTP43).